A 493-amino-acid polypeptide reads, in one-letter code: Probable mannosyl-oligosaccharide alpha-1,2-mannosidase 1B (493 aa).

Residues 1-18 (MHLPSLSVALALVSSSLA) form the signal peptide. Residues N87 and N174 are each glycosylated (N-linked (GlcNAc...) asparagine). C324 and C353 are disulfide-bonded. E367 acts as the Proton donor in catalysis. The N-linked (GlcNAc...) asparagine glycan is linked to N489.

The protein belongs to the glycosyl hydrolase 47 family. Monomer. It depends on Ca(2+) as a cofactor. The cofactor is Mg(2+).

The protein localises to the cytoplasmic vesicle lumen. The catalysed reaction is N(4)-(alpha-D-Man-(1-&gt;2)-alpha-D-Man-(1-&gt;2)-alpha-D-Man-(1-&gt;3)-[alpha-D-Man-(1-&gt;2)-alpha-D-Man-(1-&gt;3)-[alpha-D-Man-(1-&gt;2)-alpha-D-Man-(1-&gt;6)]-alpha-D-Man-(1-&gt;6)]-beta-D-Man-(1-&gt;4)-beta-D-GlcNAc-(1-&gt;4)-beta-D-GlcNAc)-L-asparaginyl-[protein] (N-glucan mannose isomer 9A1,2,3B1,2,3) + 4 H2O = N(4)-(alpha-D-Man-(1-&gt;3)-[alpha-D-Man-(1-&gt;3)-[alpha-D-Man-(1-&gt;6)]-alpha-D-Man-(1-&gt;6)]-beta-D-Man-(1-&gt;4)-beta-D-GlcNAc-(1-&gt;4)-beta-D-GlcNAc)-L-asparaginyl-[protein] (N-glucan mannose isomer 5A1,2) + 4 beta-D-mannose. It carries out the reaction N(4)-(alpha-D-Man-(1-&gt;2)-alpha-D-Man-(1-&gt;2)-alpha-D-Man-(1-&gt;3)-[alpha-D-Man-(1-&gt;3)-[alpha-D-Man-(1-&gt;2)-alpha-D-Man-(1-&gt;6)]-alpha-D-Man-(1-&gt;6)]-beta-D-Man-(1-&gt;4)-beta-D-GlcNAc-(1-&gt;4)-beta-D-GlcNAc)-L-asparaginyl-[protein] (N-glucan mannose isomer 8A1,2,3B1,3) + 3 H2O = N(4)-(alpha-D-Man-(1-&gt;3)-[alpha-D-Man-(1-&gt;3)-[alpha-D-Man-(1-&gt;6)]-alpha-D-Man-(1-&gt;6)]-beta-D-Man-(1-&gt;4)-beta-D-GlcNAc-(1-&gt;4)-beta-D-GlcNAc)-L-asparaginyl-[protein] (N-glucan mannose isomer 5A1,2) + 3 beta-D-mannose. Its pathway is protein modification; protein glycosylation. Involved in the maturation of Asn-linked oligosaccharides. Progressively trims alpha-1,2-linked mannose residues from Man(9)GlcNAc(2) to produce Man(5)GlcNAc(2). The protein is Probable mannosyl-oligosaccharide alpha-1,2-mannosidase 1B (mns1B) of Aspergillus fumigatus (strain CBS 144.89 / FGSC A1163 / CEA10) (Neosartorya fumigata).